We begin with the raw amino-acid sequence, 296 residues long: 4-hydroxy-tetrahydrodipicolinate synthase (296 aa).

Threonine 49 provides a ligand contact to pyruvate. Tyrosine 137 acts as the Proton donor/acceptor in catalysis. Lysine 166 acts as the Schiff-base intermediate with substrate in catalysis. Isoleucine 208 provides a ligand contact to pyruvate.

This sequence belongs to the DapA family. In terms of assembly, homotetramer; dimer of dimers.

It localises to the cytoplasm. It carries out the reaction L-aspartate 4-semialdehyde + pyruvate = (2S,4S)-4-hydroxy-2,3,4,5-tetrahydrodipicolinate + H2O + H(+). The protein operates within amino-acid biosynthesis; L-lysine biosynthesis via DAP pathway; (S)-tetrahydrodipicolinate from L-aspartate: step 3/4. Its function is as follows. Catalyzes the condensation of (S)-aspartate-beta-semialdehyde [(S)-ASA] and pyruvate to 4-hydroxy-tetrahydrodipicolinate (HTPA). This is 4-hydroxy-tetrahydrodipicolinate synthase from Pelodictyon phaeoclathratiforme (strain DSM 5477 / BU-1).